Here is a 509-residue protein sequence, read N- to C-terminus: Taxoid 14-beta-hydroxylase (509 aa).

3 helical membrane passes run 20-40, 186-206, and 218-238; these read AILF…LLFL, SVVA…FFNI, and LLEI…GFAY. Cys-443 provides a ligand contact to heme.

It belongs to the cytochrome P450 family.

The protein localises to the microsome membrane. The catalysed reaction is 10beta-hydroxytaxa-4(20),11-dien-5alpha-yl acetate + NADPH + O2 + H(+) = 10beta,14beta-dihydroxytaxa-4(20),11-dien-5alpha-yl acetate + NADP(+) + H2O. The protein operates within alkaloid biosynthesis; taxol biosynthesis. In terms of biological role, catalyzes the conversion of 5-alpha-acetoxy-10beta-ol to 5-alpha-acetoxy-10beta,14beta-dihydroxy taxadiene. Also acts on taxa-4(20),11-dien-5-alpha-yl acetate. This chain is Taxoid 14-beta-hydroxylase, found in Taxus cuspidata (Japanese yew).